Reading from the N-terminus, the 274-residue chain is 3-methyl-2-oxobutanoate hydroxymethyltransferase (274 aa).

Mg(2+) is bound by residues Asp49 and Asp88. Residues Asp49–Ser50, Asp88, and Lys118 contribute to the 3-methyl-2-oxobutanoate site. Mg(2+) is bound at residue Glu120. Glu187 functions as the Proton acceptor in the catalytic mechanism.

The protein belongs to the PanB family. As to quaternary structure, homodecamer; pentamer of dimers. Mg(2+) is required as a cofactor.

It is found in the cytoplasm. The enzyme catalyses 3-methyl-2-oxobutanoate + (6R)-5,10-methylene-5,6,7,8-tetrahydrofolate + H2O = 2-dehydropantoate + (6S)-5,6,7,8-tetrahydrofolate. The protein operates within cofactor biosynthesis; (R)-pantothenate biosynthesis; (R)-pantoate from 3-methyl-2-oxobutanoate: step 1/2. Functionally, catalyzes the reversible reaction in which hydroxymethyl group from 5,10-methylenetetrahydrofolate is transferred onto alpha-ketoisovalerate to form ketopantoate. This Nitrobacter winogradskyi (strain ATCC 25391 / DSM 10237 / CIP 104748 / NCIMB 11846 / Nb-255) protein is 3-methyl-2-oxobutanoate hydroxymethyltransferase.